Consider the following 459-residue polypeptide: Cysteine--tRNA ligase (459 aa).

C29 is a Zn(2+) binding site. A 'HIGH' region motif is present at residues 31–41 (MTVYDLCHLGH). Positions 213, 238, and 242 each coordinate Zn(2+). Residues 270–274 (KMSKS) carry the 'KMSKS' region motif. Position 273 (K273) interacts with ATP.

This sequence belongs to the class-I aminoacyl-tRNA synthetase family. In terms of assembly, monomer. It depends on Zn(2+) as a cofactor.

It is found in the cytoplasm. It carries out the reaction tRNA(Cys) + L-cysteine + ATP = L-cysteinyl-tRNA(Cys) + AMP + diphosphate. The chain is Cysteine--tRNA ligase from Albidiferax ferrireducens (strain ATCC BAA-621 / DSM 15236 / T118) (Rhodoferax ferrireducens).